Reading from the N-terminus, the 503-residue chain is uncharacterized protein (503 aa).

Positions 437-465 (LNKDLILENLIETENENDKQEFQKLLRTI) form a coiled coil.

Belongs to the IIV-6 467R family.

This is an uncharacterized protein from Invertebrate iridescent virus 6 (IIV-6).